A 1147-amino-acid polypeptide reads, in one-letter code: ATP-dependent helicase/deoxyribonuclease subunit B (1147 aa).

8–15 (GGSGAGKS) is an ATP binding site. [4Fe-4S] cluster-binding residues include C780, C1092, C1095, and C1101.

Belongs to the helicase family. AddB/RexB type 1 subfamily. As to quaternary structure, heterodimer of AddA and AddB. Mg(2+) is required as a cofactor. The cofactor is [4Fe-4S] cluster.

The heterodimer acts as both an ATP-dependent DNA helicase and an ATP-dependent, dual-direction single-stranded exonuclease. Recognizes the chi site generating a DNA molecule suitable for the initiation of homologous recombination. The AddB subunit has 5' -&gt; 3' nuclease activity but not helicase activity. This is ATP-dependent helicase/deoxyribonuclease subunit B from Lachnoclostridium phytofermentans (strain ATCC 700394 / DSM 18823 / ISDg) (Clostridium phytofermentans).